Here is a 966-residue protein sequence, read N- to C-terminus: MARNAVDKATSIDAQLRLLAPQKLSDDDKLVEYDALLLDRFLDILQDLHGEDIRETVQECYELAAEYENKLDPKMLDEIGNVLTSLDPGDSIVITKSFSHMLILANLAEEVQIAYRRRIKLKKGDFVDENSATTESDIEETLKRLMHQLKKSPLEVFDALKNQTVDLVLTAHPTQSVRRSLLQKHGRIRNCLTQLYAKDITPDEKQELDEALQREIQAAFRTDEIRRAPPTPQDEMRAGMSYFHETIWKGVPKFLRRVDTALKNIGINERLPYNAPIIQFSSWMGGDRDGNPRVTPEITRDVCLLARMMAANLYNAQIEDLMFELSMWRCSDELRVKVDELHRSSKKDTTKHYIEFWKQVPPSEPYRVILSDVRDKLYNTRERARHLLASGFSEIPEEATFTDVEQFLEPLELCYRSLCACGDRSVADGSLLDFLRQVSTFGLSLVRLDIRQESDRHTDVMDAITEYLGIGSYRKWTEEKRQEWLLSELNGKRPLFGPDLPKSDEIADVLDTFHVLAELPSDSFGAYVISMATAPSDVLAVELLQRECHVKKPLRVVPLFEKLADLEAAPAALARLFSVEWYRNRINGKQEVMIGYSDSGKDAGRFSAAWQLYKAQEELINVAKLYGVKLTMFHGRGGTVGRGGGPTHLAILSQPPETIHGSLRVTVQGEVIEQSFGEEHLCFRTLQRFTAATLEHGMHPPISPKPEWRALMDEMAIVATKEYRSIVFEEPRFVEYFRLATPEMEYGRMNIGSRPSKRKPSAGIESLRAIPWIFAWTQTRFHLPVWLGFGAAFKHVLDKDIRNLQTLQEMYNQWPFFRVTIDLVEMVFAKGDPGIAALYDKLLVSEDLWSFGKRLRANYEETKQLLLQVAGHKDLLEGDPYLKQRLRIRDSYITALNVCQAYMLKRIRDPGFQVNPGPHLSKDIMDMGKPASELVKLNTTSEYAPGLEDTLILTMKGIAAGMQNTG.

Ser11 is subject to Phosphoserine. Active-site residues include His172 and Lys601.

The protein belongs to the PEPCase type 1 family. As to quaternary structure, homotetramer. Mg(2+) is required as a cofactor.

The protein resides in the cytoplasm. It catalyses the reaction oxaloacetate + phosphate = phosphoenolpyruvate + hydrogencarbonate. Its activity is regulated as follows. By light-reversible phosphorylation. Its function is as follows. Through the carboxylation of phosphoenolpyruvate (PEP) it forms oxaloacetate, a four-carbon dicarboxylic acid source for the tricarboxylic acid cycle. This Saccharum hybrid (Sugarcane) protein is Phosphoenolpyruvate carboxylase, housekeeping isozyme.